The following is a 380-amino-acid chain: NADPH oxidoreductase (380 aa).

One can recognise an FAD-binding FR-type domain in the interval 58–164 (ARELRGRILG…AAPQGNFVLP (107 aa)). Residues 299–380 (GTVTFARSGK…AASGDCVLDI (82 aa)) form the 2Fe-2S ferredoxin-type domain. 4 residues coordinate [2Fe-2S] cluster: C333, C338, C341, and C368.

In terms of assembly, interacts with DesA3 to form a functional acyl-CoA desaturase complex. [2Fe-2S] cluster is required as a cofactor. FAD serves as cofactor.

The protein localises to the cell membrane. The protein operates within lipid metabolism; fatty acid metabolism. Functionally, is likely involved in the aerobic desaturation system responsible for the synthesis of oleic acid from stearoyl-CoA; oleic acid is a precursor of mycobacterial membrane phospholipids and triglycerides. Is the electron transfer partner for the stearoyl-CoA 9-desaturase DesA3. Catalyzes electron transfer reaction between NADPH and the diiron center of DesA3. Cannot use NADH. This is NADPH oxidoreductase from Mycobacterium tuberculosis (strain ATCC 25618 / H37Rv).